Here is a 315-residue protein sequence, read N- to C-terminus: Aspartate carbamoyltransferase catalytic subunit (315 aa).

2 residues coordinate carbamoyl phosphate: Arg64 and Thr65. Lys92 contributes to the L-aspartate binding site. 3 residues coordinate carbamoyl phosphate: Arg114, His142, and Gln145. L-aspartate is bound by residues Arg175 and Arg229. Carbamoyl phosphate contacts are provided by Gly270 and Pro271.

It belongs to the aspartate/ornithine carbamoyltransferase superfamily. ATCase family. Heterododecamer (2C3:3R2) of six catalytic PyrB chains organized as two trimers (C3), and six regulatory PyrI chains organized as three dimers (R2).

It carries out the reaction carbamoyl phosphate + L-aspartate = N-carbamoyl-L-aspartate + phosphate + H(+). It participates in pyrimidine metabolism; UMP biosynthesis via de novo pathway; (S)-dihydroorotate from bicarbonate: step 2/3. Its function is as follows. Catalyzes the condensation of carbamoyl phosphate and aspartate to form carbamoyl aspartate and inorganic phosphate, the committed step in the de novo pyrimidine nucleotide biosynthesis pathway. This chain is Aspartate carbamoyltransferase catalytic subunit, found in Xanthobacter autotrophicus (strain ATCC BAA-1158 / Py2).